A 64-amino-acid chain; its full sequence is Large ribosomal subunit protein bL35 (64 aa).

A disordered region spans residues 1–64 (MPKNKTNSGA…RKSIKKLLGK (64 aa)).

It belongs to the bacterial ribosomal protein bL35 family.

The protein is Large ribosomal subunit protein bL35 of Beutenbergia cavernae (strain ATCC BAA-8 / DSM 12333 / CCUG 43141 / JCM 11478 / NBRC 16432 / NCIMB 13614 / HKI 0122).